Here is a 134-residue protein sequence, read N- to C-terminus: Beta-synuclein (134 aa).

Tandem repeats lie at residues 20–30 and 31–41. A 4 X 11 AA tandem repeats of [EGS]-K-T-K-[EQ]-[GQ]-V-X(4) region spans residues 20–67; the sequence is EKTKQGVTEAAEKTKEGVLYVGSKTKEGVVQGVASVAEKTKEQASHLG. The stretch at 42–56 is one 3; approximate repeat; it reads SKTKEGVVQGVASVA. The stretch at 57–67 is repeat 4; sequence EKTKEQASHLG. The segment at 97-134 is disordered; it reads EVAQEAAEEPLIEPLMEPEGESYEEQPQEEYQEYEPEA. Residues 98–134 are compositionally biased toward acidic residues; the sequence is VAQEAAEEPLIEPLMEPEGESYEEQPQEEYQEYEPEA. Ser-118 bears the Phosphoserine; by BARK1, CK2 and GRK5 mark.

Belongs to the synuclein family. Phosphorylated. Phosphorylation by G-protein coupled receptor kinases (GRK) is more efficient than phosphorylation by CK1, CK2 and CaM-kinase II. In terms of tissue distribution, specifically present in synapses around neurons but not in glial cells.

The protein resides in the cytoplasm. Its function is as follows. May be involved in neuronal plasticity. This Bos taurus (Bovine) protein is Beta-synuclein (SNCB).